The following is a 510-amino-acid chain: NAD(P)H-quinone oxidoreductase subunit 2 B, chloroplastic (510 aa).

The next 14 membrane-spanning stretches (helical) occupy residues 24–44 (LLLF…GLIL), 59–79 (WFYF…LFRW), 99–119 (IFQF…VEYI), 124–144 (MAIT…MFLC), 149–169 (LITI…LSGY), 184–204 (LLMG…LYGL), 229–249 (ISIA…LAPF), 261–281 (PTPV…ALAT), 295–315 (WHLL…LLAI), 323–343 (MLAY…IVGD), 354–374 (YMLF…LFGL), 395–415 (ALSL…AGFF), 418–438 (LYLF…IGLL), and 484–504 (MTVC…ILAI).

It belongs to the complex I subunit 2 family. NDH is composed of at least 16 different subunits, 5 of which are encoded in the nucleus.

Its subcellular location is the plastid. The protein localises to the chloroplast thylakoid membrane. The enzyme catalyses a plastoquinone + NADH + (n+1) H(+)(in) = a plastoquinol + NAD(+) + n H(+)(out). It carries out the reaction a plastoquinone + NADPH + (n+1) H(+)(in) = a plastoquinol + NADP(+) + n H(+)(out). NDH shuttles electrons from NAD(P)H:plastoquinone, via FMN and iron-sulfur (Fe-S) centers, to quinones in the photosynthetic chain and possibly in a chloroplast respiratory chain. The immediate electron acceptor for the enzyme in this species is believed to be plastoquinone. Couples the redox reaction to proton translocation, and thus conserves the redox energy in a proton gradient. The sequence is that of NAD(P)H-quinone oxidoreductase subunit 2 B, chloroplastic from Zea mays (Maize).